We begin with the raw amino-acid sequence, 573 residues long: (R)-mandelonitrile lyase 3 (573 aa).

A signal peptide spans 1–27; it reads MVKSTMSAVLLVLHIFVLHLQYSEVQS. An N-linked (GlcNAc...) asparagine glycan is attached at Asn-30. Position 63–64 (63–64) interacts with FAD; the sequence is TA. The N-linked (GlcNAc...) asparagine glycan is linked to Asn-75. FAD contacts are provided by residues 82–83, Val-129, Thr-133, and 137–140; these read ER and NAGV. N-linked (GlcNAc...) asparagine glycosylation is found at Asn-145, Asn-150, Asn-162, and Asn-218. Residue Val-244 coordinates FAD. Residues Asn-252, Asn-267, and Asn-309 are each glycosylated (N-linked (GlcNAc...) asparagine). Cys-356 lines the substrate pocket. 4 N-linked (GlcNAc...) asparagine glycosylation sites follow: Asn-380, Asn-402, Asn-420, and Asn-467. Cys-427 and Cys-478 are disulfide-bonded. Residue Tyr-485 participates in substrate binding. Residues 486–487 and Gly-515 each bind FAD; that span reads WH. Catalysis depends on His-487, which acts as the Proton donor. His-525 serves as the catalytic Proton acceptor. 526-527 is a binding site for FAD; that stretch reads PQ.

It belongs to the GMC oxidoreductase family. As to quaternary structure, monomer. FAD serves as cofactor.

It localises to the vacuole. It is found in the aleurone grain. The enzyme catalyses (R)-mandelonitrile = benzaldehyde + hydrogen cyanide. Involved in cyanogenesis, the release of HCN from injured tissues. Catalyzes the stereospecific addition of HCN to a variety of aldehydes in vitro. It is a major seed constituent, and could have the additional role of a storage form for reduced nitrogen. This chain is (R)-mandelonitrile lyase 3 (MDL3), found in Prunus serotina (Black cherry).